The following is a 421-amino-acid chain: Gamma-glutamyl phosphate reductase (421 aa).

This sequence belongs to the gamma-glutamyl phosphate reductase family.

It localises to the cytoplasm. The catalysed reaction is L-glutamate 5-semialdehyde + phosphate + NADP(+) = L-glutamyl 5-phosphate + NADPH + H(+). It functions in the pathway amino-acid biosynthesis; L-proline biosynthesis; L-glutamate 5-semialdehyde from L-glutamate: step 2/2. Catalyzes the NADPH-dependent reduction of L-glutamate 5-phosphate into L-glutamate 5-semialdehyde and phosphate. The product spontaneously undergoes cyclization to form 1-pyrroline-5-carboxylate. In Roseobacter denitrificans (strain ATCC 33942 / OCh 114) (Erythrobacter sp. (strain OCh 114)), this protein is Gamma-glutamyl phosphate reductase.